The sequence spans 811 residues: Lysine-specific histone demethylase 1 homolog 3 (811 aa).

A compositionally biased stretch (pro residues) spans M1–P10. Positions M1–S79 are disordered. Residues N44–L55 show a composition bias toward basic residues. Residues P56–S71 show a composition bias toward low complexity. The region spanning N88–R189 is the SWIRM domain. 4 residues coordinate FAD: E227, R229, R235, and E609. The disordered stretch occupies residues R790–S811.

It belongs to the flavin monoamine oxidase family. It depends on FAD as a cofactor.

Functionally, probable histone demethylase. This Oryza sativa subsp. japonica (Rice) protein is Lysine-specific histone demethylase 1 homolog 3.